Here is a 147-residue protein sequence, read N- to C-terminus: Pathogenesis-related protein PR-4B (147 aa).

The N-terminal stretch at 1–25 (MERVNNYKLCVALLIMSVMMAMAAA) is a signal peptide. Residues 26 to 147 (QSATNVRSTY…VNYEFVNCND (122 aa)) enclose the Barwin domain. Cystine bridges form between cysteine 54-cysteine 86, cysteine 75-cysteine 109, and cysteine 89-cysteine 145.

It is found in the secreted. The protein localises to the cell wall. This chain is Pathogenesis-related protein PR-4B, found in Nicotiana tabacum (Common tobacco).